We begin with the raw amino-acid sequence, 156 residues long: UPF0251 protein Sfum_2819 (156 aa).

This sequence belongs to the UPF0251 family.

The polypeptide is UPF0251 protein Sfum_2819 (Syntrophobacter fumaroxidans (strain DSM 10017 / MPOB)).